The chain runs to 308 residues: Ornithine carbamoyltransferase (308 aa).

Carbamoyl phosphate is bound by residues S57–T60, Q84, R108, and H135–Q138. L-ornithine-binding positions include N166, D224, and S228 to M229. Residues C264–L265 and R292 each bind carbamoyl phosphate.

This sequence belongs to the aspartate/ornithine carbamoyltransferase superfamily. OTCase family.

Its subcellular location is the cytoplasm. The catalysed reaction is carbamoyl phosphate + L-ornithine = L-citrulline + phosphate + H(+). It functions in the pathway amino-acid degradation; L-arginine degradation via ADI pathway; carbamoyl phosphate from L-arginine: step 2/2. In terms of biological role, reversibly catalyzes the transfer of the carbamoyl group from carbamoyl phosphate (CP) to the N(epsilon) atom of ornithine (ORN) to produce L-citrulline. The chain is Ornithine carbamoyltransferase from Ralstonia pickettii (strain 12J).